Reading from the N-terminus, the 275-residue chain is Autophagy protein 5 (275 aa).

Methionine 1 bears the N-acetylmethionine mark. Lysine 130 participates in a covalent cross-link: Glycyl lysine isopeptide (Lys-Gly) (interchain with G-Cter in ATG12).

The protein belongs to the ATG5 family. Forms a conjugate with ATG12. Part of the minor complex composed of 4 sets of ATG12-ATG5 and ATG16L1 (400 kDa); this complex interacts with ATG3 leading to disruption of ATG7 interaction and promotion of ATG8-like proteins lipidation. Forms an 800-kDa complex composed of ATG12-ATG5 and ATG16L2. The ATG12-ATG5 conjugate interacts with RAB33A; this interaction is bridged by ATG16L1 and promotes ATG12-ATG5-ATG16L1 complex recruitment to phagophores. Interacts with TECPR1; the interaction is direct and does not take place when ATG16L1 is associated with the ATG5-ATG12 conjugate. Interacts with DHX58/RIG-1, IFIH1/MDA5 and MAVS/IPS-1 in monomeric form as well as in ATG12-ATG5 conjugate form. The interaction with MAVS is further enhanced upon vesicular stomatitis virus (VSV) infection. Interacts with ATG3. Interacts with ATG7 and ATG10. Interacts with FADD. Interacts with Bassoon/BSN; this interaction is important for the regulation of presynaptic autophagy. Interacts with ATG16L2. Conjugated to ATG12; which is essential for autophagy, but is not required for association with isolation membrane. Post-translationally, acetylated by EP300.

The protein resides in the cytoplasm. It is found in the preautophagosomal structure membrane. Involved in autophagic vesicle formation. Conjugation with ATG12, through a ubiquitin-like conjugating system involving ATG7 as an E1-like activating enzyme and ATG10 as an E2-like conjugating enzyme, is essential for its function. The ATG12-ATG5 conjugate acts as an E3-like enzyme which is required for lipidation of ATG8 family proteins and their association to the vesicle membranes. Involved in mitochondrial quality control after oxidative damage, and in subsequent cellular longevity. Plays a critical role in multiple aspects of lymphocyte development and is essential for both B and T lymphocyte survival and proliferation. Required for optimal processing and presentation of antigens for MHC II. Involved in the maintenance of axon morphology and membrane structures, as well as in normal adipocyte differentiation. Promotes primary ciliogenesis through removal of OFD1 from centriolar satellites and degradation of IFT20 via the autophagic pathway. As part of the ATG8 conjugation system with ATG12 and ATG16L1, required for recruitment of LRRK2 to stressed lysosomes and induction of LRRK2 kinase activity in response to lysosomal stress. Its function is as follows. May play an important role in the apoptotic process, possibly within the modified cytoskeleton. Its expression is a relatively late event in the apoptotic process, occurring downstream of caspase activity. Plays a crucial role in IFN-gamma-induced autophagic cell death by interacting with FADD. The protein is Autophagy protein 5 of Bos taurus (Bovine).